We begin with the raw amino-acid sequence, 77 residues long: Metallothionein-like protein type 2 (77 aa).

It belongs to the metallothionein superfamily. Type 15 family. Expressed in the left, stem and flower, at very low levels in roots and is not detectable in mesophyll protoplasts.

In terms of biological role, metallothioneins have a high content of cysteine residues that bind various heavy metals. The sequence is that of Metallothionein-like protein type 2 (MTI) from Vicia faba (Broad bean).